The primary structure comprises 311 residues: Aspartate carbamoyltransferase catalytic subunit (311 aa).

Carbamoyl phosphate is bound by residues Arg58 and Thr59. Lys86 is an L-aspartate binding site. The carbamoyl phosphate site is built by Arg108, His136, and Gln139. L-aspartate-binding residues include Arg169 and Arg224. The carbamoyl phosphate site is built by Gly265 and Pro266.

This sequence belongs to the aspartate/ornithine carbamoyltransferase superfamily. ATCase family. In terms of assembly, heterododecamer (2C3:3R2) of six catalytic PyrB chains organized as two trimers (C3), and six regulatory PyrI chains organized as three dimers (R2).

The enzyme catalyses carbamoyl phosphate + L-aspartate = N-carbamoyl-L-aspartate + phosphate + H(+). The protein operates within pyrimidine metabolism; UMP biosynthesis via de novo pathway; (S)-dihydroorotate from bicarbonate: step 2/3. In terms of biological role, catalyzes the condensation of carbamoyl phosphate and aspartate to form carbamoyl aspartate and inorganic phosphate, the committed step in the de novo pyrimidine nucleotide biosynthesis pathway. This Geobacter sulfurreducens (strain ATCC 51573 / DSM 12127 / PCA) protein is Aspartate carbamoyltransferase catalytic subunit.